The following is a 293-amino-acid chain: Formamidopyrimidine-DNA glycosylase (293 aa).

The active-site Schiff-base intermediate with DNA is the P2. The active-site Proton donor is the E3. K61 serves as the catalytic Proton donor; for beta-elimination activity. Residues H104, R123, and K169 each coordinate DNA. The FPG-type zinc finger occupies 255–289; it reads DAYGREGEPCRRCGAIMRRDKFMNRSSFYCPRCQP. The active-site Proton donor; for delta-elimination activity is R279.

Belongs to the FPG family. In terms of assembly, monomer. Requires Zn(2+) as cofactor.

The enzyme catalyses Hydrolysis of DNA containing ring-opened 7-methylguanine residues, releasing 2,6-diamino-4-hydroxy-5-(N-methyl)formamidopyrimidine.. It catalyses the reaction 2'-deoxyribonucleotide-(2'-deoxyribose 5'-phosphate)-2'-deoxyribonucleotide-DNA = a 3'-end 2'-deoxyribonucleotide-(2,3-dehydro-2,3-deoxyribose 5'-phosphate)-DNA + a 5'-end 5'-phospho-2'-deoxyribonucleoside-DNA + H(+). Functionally, involved in base excision repair of DNA damaged by oxidation or by mutagenic agents. Acts as a DNA glycosylase that recognizes and removes damaged bases. Has a preference for oxidized purines, such as 7,8-dihydro-8-oxoguanine (8-oxoG). Has AP (apurinic/apyrimidinic) lyase activity and introduces nicks in the DNA strand. Cleaves the DNA backbone by beta-delta elimination to generate a single-strand break at the site of the removed base with both 3'- and 5'-phosphates. The protein is Formamidopyrimidine-DNA glycosylase of Mycolicibacterium vanbaalenii (strain DSM 7251 / JCM 13017 / BCRC 16820 / KCTC 9966 / NRRL B-24157 / PYR-1) (Mycobacterium vanbaalenii).